A 551-amino-acid chain; its full sequence is Probable CoA ligase CCL5 (551 aa).

Residues 204-212 (SSGTTGASK), 345-350 (QGYGLT), Asp431, 443-446 (VVDR), and Lys537 contribute to the ATP site. Residues 274–345 (EIHEMLSAIE…ENYPTVSILQ (72 aa)) are SBD1. The interval 346-410 (GYGLTESTGI…LRGPTIMKGY (65 aa)) is SBD2.

This sequence belongs to the ATP-dependent AMP-binding enzyme family. Mostly expressed at low levels in glandular trichomes (lupulin glands) after flowering, and, to a lower extent, in stems, leaves, cones and flowers.

The protein resides in the cytoplasm. Its subcellular location is the cytosol. In Humulus lupulus (European hop), this protein is Probable CoA ligase CCL5.